Reading from the N-terminus, the 130-residue chain is Small ribosomal subunit protein uS9 (130 aa).

Belongs to the universal ribosomal protein uS9 family.

The chain is Small ribosomal subunit protein uS9 from Ralstonia nicotianae (strain ATCC BAA-1114 / GMI1000) (Ralstonia solanacearum).